The primary structure comprises 272 residues: Aquaporin-1 (272 aa).

The Cytoplasmic portion of the chain corresponds to 1–11; sequence MASEFKKKLFW. Residues 12–29 traverse the membrane as a helical segment; that stretch reads RAVVAEFLAMILFIFISI. Residues 30–48 lie on the Extracellular side of the membrane; the sequence is GSALGFHYPIKSNQTTGAV. Residue Asn42 is glycosylated (N-linked (GlcNAc...) asparagine). The helical transmembrane segment at 49–67 threads the bilayer; it reads QDNVKVSLAFGLSIATLAQ. Residues 68 to 70 lie on the Cytoplasmic side of the membrane; it reads SVG. Residues 71–84 lie within the membrane without spanning it; it reads HISGAHLNPAVTLG. Residues 78-80 carry the NPA 1 motif; the sequence is NPA. Topologically, residues 85-92 are cytoplasmic; it reads LLLSCQIS. The helical transmembrane segment at 93 to 111 threads the bilayer; it reads ILRAIMYIIAQCVGAIVAT. Topologically, residues 112–135 are extracellular; sequence VILSGITSSLPDNSLGLNALAPGV. A helical transmembrane segment spans residues 136-155; the sequence is NSGQGLGIEIIGTLQLVLCV. The Cytoplasmic segment spans residues 156–166; that stretch reads LATTDRRRRRD. The chain crosses the membrane as a helical span at residues 167–184; that stretch reads LGDSGPLAIGFSVALGHL. The Extracellular segment spans residues 185 to 189; that stretch reads LAIDY. The stretch at 190–202 is an intramembrane region; it reads TGCGINPARSFGS. Residues 195 to 197 carry the NPA 2 motif; the sequence is NPA. Over 203–209 the chain is Extracellular; it reads SVITHNF. Residues 210 to 227 traverse the membrane as a helical segment; it reads QDHWIFWVGPFIGAALAV. Over 228 to 272 the chain is Cytoplasmic; the sequence is LIYDFILAPRSSDLTDRVKVWTSGQVEEYDLDADDINSRVEMKPK. The residue at position 250 (Ser250) is a Phosphoserine. The residue at position 256 (Tyr256) is a Phosphotyrosine. Ser265 bears the Phosphoserine mark.

Belongs to the MIP/aquaporin (TC 1.A.8) family. Homotetramer; each monomer provides an independent water pore. Component of the ankyrin-1 complex in the erythrocyte, composed of ANK1, RHCE, RHAG, SLC4A1, EPB42, GYPA, GYPB and AQP1. Interacts with EPHB2; involved in endolymph production in the inner ear. Identified in a complex with STOM. Interacts (via the N-terminal) with ANK1 (via ANK 1-5 repeats). Interacts (via the C-terminal) with EPB42. As to expression, detected in fetal kidney (at protein level). Detected in fetal kidney.

Its subcellular location is the cell membrane. It catalyses the reaction H2O(in) = H2O(out). It carries out the reaction nitric oxide(out) = nitric oxide(in). The enzyme catalyses CO2(out) = CO2(in). The catalysed reaction is glycerol(in) = glycerol(out). It catalyses the reaction H2O2(out) = H2O2(in). It carries out the reaction K(+)(in) = K(+)(out). The enzyme catalyses Na(+)(in) = Na(+)(out). Forms a water channel that facilitates the transport of water across cell membranes, playing a crucial role in water homeostasis in various tissues. Could also be permeable to small solutes including hydrogen peroxide, glycerol and gases such as amonnia (NH3), nitric oxide (NO) and carbon dioxide (CO2). Recruited to the ankyrin-1 complex, a multiprotein complex of the erythrocyte membrane, it could be part of a CO2 metabolon, linking facilitated diffusion of CO2 across the membrane, anion exchange of Cl(-)/HCO3(-) and interconversion of dissolved CO2 and carbonic acid in the cytosol. In vitro, it shows non-selective gated cation channel activity and may be permeable to cations like K(+) and Na(+) in vivo. The polypeptide is Aquaporin-1 (Ovis aries (Sheep)).